An 87-amino-acid chain; its full sequence is U3-theraphotoxin-Hhn1l (87 aa).

Residues 1-24 form the signal peptide; the sequence is MVNMKASMFLTFAGLVLLFVVCYA. Residues 25–52 constitute a propeptide that is removed on maturation; it reads SESEEKEFPKEMLSSIFAVDNDFKQEER. Intrachain disulfides connect Cys54–Cys67, Cys61–Cys72, and Cys66–Cys79.

The protein belongs to the neurotoxin 10 (Hwtx-1) family. 51 (Hntx-8) subfamily. Hntx-8 sub-subfamily. In terms of tissue distribution, expressed by the venom gland.

Its subcellular location is the secreted. Functionally, ion channel inhibitor. The protein is U3-theraphotoxin-Hhn1l of Cyriopagopus hainanus (Chinese bird spider).